Consider the following 222-residue polypeptide: Probable transaldolase (222 aa).

Catalysis depends on K91, which acts as the Schiff-base intermediate with substrate.

The protein belongs to the transaldolase family. Type 3B subfamily.

The protein resides in the cytoplasm. It carries out the reaction D-sedoheptulose 7-phosphate + D-glyceraldehyde 3-phosphate = D-erythrose 4-phosphate + beta-D-fructose 6-phosphate. The protein operates within carbohydrate degradation; pentose phosphate pathway; D-glyceraldehyde 3-phosphate and beta-D-fructose 6-phosphate from D-ribose 5-phosphate and D-xylulose 5-phosphate (non-oxidative stage): step 2/3. Its function is as follows. Transaldolase is important for the balance of metabolites in the pentose-phosphate pathway. This is Probable transaldolase from Chlorobium luteolum (strain DSM 273 / BCRC 81028 / 2530) (Pelodictyon luteolum).